Consider the following 258-residue polypeptide: Protein OS-9 homolog (258 aa).

The first 18 residues, 1–18 (MNWTSLVYLWFIFKSIFA), serve as a signal peptide directing secretion. N2, N51, and N70 each carry an N-linked (GlcNAc...) asparagine glycan. Residues 114–237 (TSCVFSFNLH…HINVPKLCSL (124 aa)) enclose the MRH domain. An intrachain disulfide couples C116 to C132. 2 residues coordinate a mannooligosaccharide derivative: W127 and Q139. Residue N165 is glycosylated (N-linked (GlcNAc...) asparagine). 2 disulfide bridges follow: C193–C223 and C208–C235. 4 residues coordinate a mannooligosaccharide derivative: D194, R200, E219, and Y225.

Belongs to the OS-9 family. As to quaternary structure, interacts with missfolded ER lumenal proteins.

It localises to the endoplasmic reticulum membrane. Functionally, lectin involved in the quality control of the secretory pathway. As a member of the endoplasmic reticulum-associated degradation lumenal (ERAD-L) surveillance system, targets misfolded endoplasmic reticulum lumenal glycoproteins for degradation. The polypeptide is Protein OS-9 homolog (YOS9) (Candida albicans (strain SC5314 / ATCC MYA-2876) (Yeast)).